We begin with the raw amino-acid sequence, 279 residues long: Protoheme IX farnesyltransferase (279 aa).

9 helical membrane passes run 1-21 (MIKP…FFLA), 29-49 (IFFL…CILN), 79-99 (ILFF…YIYI), 101-121 (FLCT…YSYL), 128-148 (FSTF…YVAV), 156-176 (CTIL…SIII), 200-220 (IIFI…LYFF), 225-245 (FFYF…SFLS), and 254-274 (IWSR…SFLM).

This sequence belongs to the UbiA prenyltransferase family. Protoheme IX farnesyltransferase subfamily.

It localises to the cell membrane. The catalysed reaction is heme b + (2E,6E)-farnesyl diphosphate + H2O = Fe(II)-heme o + diphosphate. It participates in porphyrin-containing compound metabolism; heme O biosynthesis; heme O from protoheme: step 1/1. Converts heme B (protoheme IX) to heme O by substitution of the vinyl group on carbon 2 of heme B porphyrin ring with a hydroxyethyl farnesyl side group. The chain is Protoheme IX farnesyltransferase from Buchnera aphidicola subsp. Cinara cedri (strain Cc).